The sequence spans 604 residues: Prostaglandin G/H synthase 2 (604 aa).

Residues 1–17 form the signal peptide; that stretch reads MLARALLLCAVLALSHT. An EGF-like domain is found at 18–55; the sequence is ANPCCSHPCQNRGVCMSVGFDQYKCDCTRTGFYGENCS. Cystine bridges form between Cys21–Cys32, Cys22–Cys145, Cys26–Cys42, and Cys44–Cys54. Asn53 is a glycosylation site (N-linked (GlcNAc...) asparagine). Residue Arg106 participates in substrate binding. N-linked (GlcNAc...) asparagine glycosylation occurs at Asn130. The active-site Proton acceptor is His193. A substrate-binding site is contributed by Tyr341. Tyr371 acts as the For cyclooxygenase activity in catalysis. His374 contacts heme b. Asn396 carries N-linked (GlcNAc...) asparagine glycosylation. Cys526 is modified (S-nitrosocysteine). Cys555 and Cys561 form a disulfide bridge. Ser565 carries the post-translational modification O-acetylserine. Asn580 carries an N-linked (GlcNAc...) asparagine glycan.

The protein belongs to the prostaglandin G/H synthase family. Homodimer. Heme b serves as cofactor. Post-translationally, S-nitrosylation by NOS2 (iNOS) activates enzyme activity. S-nitrosylation may take place on different Cys residues in addition to Cys-526. Acetylated at Ser-565 by SPHK1. During neuroinflammation, acetylation by SPHK1 promotes neuronal secretion of specialized preresolving mediators (SPMs), especially 15-R-lipoxin A4, which results in an increase of phagocytic microglia.

It localises to the microsome membrane. It is found in the endoplasmic reticulum membrane. The protein localises to the nucleus inner membrane. Its subcellular location is the nucleus outer membrane. The enzyme catalyses (5Z,8Z,11Z,14Z)-eicosatetraenoate + AH2 + 2 O2 = prostaglandin H2 + A + H2O. It catalyses the reaction (5Z,8Z,11Z,14Z)-eicosatetraenoate + 2 O2 = prostaglandin G2. The catalysed reaction is prostaglandin G2 + AH2 = prostaglandin H2 + A + H2O. It carries out the reaction (5Z,8Z,11Z,14Z,17Z)-eicosapentaenoate + 2 O2 = prostaglandin G3. The enzyme catalyses prostaglandin G3 + AH2 = prostaglandin H3 + A + H2O. It catalyses the reaction (8Z,11Z,14Z)-eicosatrienoate + 2 O2 = prostaglandin G1. The catalysed reaction is prostaglandin G1 + AH2 = prostaglandin H1 + A + H2O. It carries out the reaction 2-(5Z,8Z,11Z,14Z)-eicosatetraenoyl-sn-glycero-3-phosphoethanolamine + 2 O2 = 2-(prostaglandin G2)-sn-glycero-3-phosphoethanolamine. The enzyme catalyses 2-(prostaglandin G2)-sn-glycero-3-phosphoethanolamine + AH2 = 2-(prostaglandin H2)-sn-glycero-3-phosphoethanolamine + A + H2O. It catalyses the reaction 2-(5Z,8Z,11Z,14Z)-eicosatetraenoyl-sn-glycero-3-phosphocholine + 2 O2 = 2-(prostaglandin G2)-sn-glycero-3-phosphocholine. The catalysed reaction is 2-(prostaglandin G2)-sn-glycero-3-phosphocholine + AH2 = 2-(prostaglandin H2)-sn-glycero-3-phosphocholine + A + H2O. It carries out the reaction (15S)-hydroperoxy-(5Z,8Z,11Z,13E)-eicosatetraenoate + AH2 = (15S)-hydroxy-(5Z,8Z,11Z,13E)-eicosatetraenoate + A + H2O. The enzyme catalyses 2-(5Z,8Z,11Z,14Z)-eicosatetraenoyl-sn-glycero-3-phosphocholine + AH2 + O2 = 2-[(15S)-hydroxy-(5Z,8Z,11Z,13E)-eicosatetraenoyl]-sn-glycero-3-phosphocholine + A + H2O. It catalyses the reaction 2-(5Z,8Z,11Z,14Z)-eicosatetraenoyl-sn-glycero-3-phosphocholine + AH2 + O2 = 2-[(15R)-hydroxy-(5Z,8Z,11Z,13E)-eicosatetraenoyl]-sn-glycero-3-phosphocholine + A + H2O. The catalysed reaction is 2-(5Z,8Z,11Z,14Z)-eicosatetraenoyl-sn-glycero-3-phosphocholine + AH2 + O2 = 2-[(11R)-hydroxy-(5Z,8Z,12E,14Z)-eicosatetraenoyl]-sn-glycero-3-phosphocholine + A + H2O. It carries out the reaction (9Z,12Z)-octadecadienoate + AH2 + O2 = 9-hydroxy-(10E,12Z)-octadecadienoate + A + H2O. The enzyme catalyses (9Z,12Z)-octadecadienoate + AH2 + O2 = 13-hydroxy-(9Z,11E)-octadecadienoate + A + H2O. It catalyses the reaction (5Z,8Z,11Z,14Z)-eicosatetraenoate + AH2 + O2 = (15R)-hydroxy-(5Z,8Z,11Z,13E)-eicosatetraenoate + A + H2O. The catalysed reaction is (5Z,8Z,11Z,14Z)-eicosatetraenoate + AH2 + O2 = (11R)-hydroxy-(5Z,8Z,12E,14Z)-eicosatetraenoate + A + H2O. It carries out the reaction (5Z,8Z,11Z,14Z,17Z)-eicosapentaenoate + AH2 + O2 = (11R)-hydroxy-(5Z,8Z,12E,14Z,17Z)-eicosapentaenoate + A + H2O. The enzyme catalyses (5Z,8Z,11Z,14Z,17Z)-eicosapentaenoate + AH2 + O2 = (18S)-hydroxy-(5Z,8Z,11Z,14Z,16E)-eicosapentaenoate + A + H2O. It catalyses the reaction (5Z,8Z,11Z,14Z,17Z)-eicosapentaenoate + AH2 + O2 = (18R)-hydroxy-(5Z,8Z,11Z,14Z,16E)-eicosapentaenoate + A + H2O. The catalysed reaction is (5Z,8Z,11Z,14Z,17Z)-eicosapentaenoate + AH2 + O2 = (15R)-hydroxy-(5Z,8Z,11Z,13E,17Z)-eicosapentaenoate + A + H2O. It carries out the reaction (5Z,8Z,11Z,14Z,17Z)-eicosapentaenoate + AH2 + O2 = (15S)-hydroxy-(5Z,8Z,11Z,13E,17Z)-eicosapentaenoate + A + H2O. The enzyme catalyses (7Z,10Z,13Z,16Z,19Z)-docosapentaenoate + AH2 + O2 = 13R-hydroxy-(7Z,10Z,14E,16Z,19Z)-docosapentaenoate + A + H2O. It catalyses the reaction (4Z,7Z,10Z,13Z,16Z,19Z)-docosahexaenoate + AH2 + O2 = 13-hydroxy-(4Z,7Z,10Z,14E,16Z,19Z)-docosahexaenoate + A + H2O. The catalysed reaction is (5S)-hydroxy-(6E,8Z,11Z,14Z)-eicosatetraenoate + AH2 + O2 = (5S,15R)-dihydroxy-(6E,8Z,11Z,13E)-eicosatetraenoate + A + H2O. It carries out the reaction (4Z,7Z,10Z,13Z,16Z,19Z)-docosahexaenoate + AH2 + O2 = 17R-hydroxy-(4Z,7Z,10Z,13Z,15E,19Z)-docosahexaenoate + A + H2O. The enzyme catalyses (5S)-hydroxy-(6E,8Z,11Z,14Z)-eicosatetraenoate + AH2 + O2 = (5S,15S)-dihydroxy-(6E,8Z,11Z,13E)-eicosatetraenoate + A + H2O. It catalyses the reaction (5S)-hydroxy-(6E,8Z,11Z,14Z)-eicosatetraenoate + AH2 + O2 = (5S,11R)-dihydroxy-(6E,8Z,12E,14Z)-eicosatetraenoate + A + H2O. The catalysed reaction is 2-(5Z,8Z,11Z,14Z-eicosatetraenoyl)-glycerol + 2 O2 = 2-glyceryl-prostaglandin G2. It carries out the reaction 2-glyceryl-prostaglandin G2 + AH2 = 2-glyceryl-prostaglandin H2 + A + H2O. The enzyme catalyses (5Z,8Z,11Z,14Z)-eicosatetraenoate + O2 = (15R)-hydroperoxy-(5Z,8Z,11Z,13E)-eicosatetraenoate. It catalyses the reaction (5Z,8Z,11Z,14Z)-eicosatetraenoate + O2 = 11R-hydroperoxy-(5Z,8Z,12E,14Z)-eicosatetraenoate. The catalysed reaction is (9Z,12Z)-octadecadienoate + AH2 + O2 = (9R)-hydroxy-(10E,12Z)-octadecadienoate + A + H2O. It carries out the reaction (9Z,12Z)-octadecadienoate + AH2 + O2 = (9S)-hydroxy-(10E,12Z)-octadecadienoate + A + H2O. The enzyme catalyses (9Z,12Z)-octadecadienoate + AH2 + O2 = (13S)-hydroxy-(9Z,11E)-octadecadienoate + A + H2O. It catalyses the reaction (9Z,12Z)-octadecadienoate + AH2 + O2 = (13R)-hydroxy-(9Z,11E)-octadecadienoate + A + H2O. It participates in lipid metabolism; prostaglandin biosynthesis. The cyclooxygenase activity is inhibited by nonsteroidal anti-inflammatory drugs (NSAIDs) including aspirin, ibuprofen, flurbiprofen, celecoxib, flufenamic, mefenamic and tolfenamic acids as well as by hydroperoxide scavenger erythrocyte glutathione peroxidase GPX1. Aspirin triggers enzyme acetylation turning off its ability to generate pro-inflammatory prostaglandins, but switches on its capacity to produce anti-inflammatory lipid mediators involved in inflammation resolution. Aspirin enhances lipoxygenase-type activity toward production of epimers with R stereochemistry such as 15R-HETE, 18R-HEPE, 15R-HEPE and 17R-HDHA. Atorvastatin, a cholesterol-lowering drug, triggers enzyme S-nitrosylation increasing production of 13-series resolvins (RvTs). Functionally, dual cyclooxygenase and peroxidase in the biosynthesis pathway of prostanoids, a class of C20 oxylipins mainly derived from arachidonate ((5Z,8Z,11Z,14Z)-eicosatetraenoate, AA, C20:4(n-6)), with a particular role in the inflammatory response. The cyclooxygenase activity oxygenates AA to the hydroperoxy endoperoxide prostaglandin G2 (PGG2), and the peroxidase activity reduces PGG2 to the hydroxy endoperoxide prostaglandin H2 (PGH2), the precursor of all 2-series prostaglandins and thromboxanes. This complex transformation is initiated by abstraction of hydrogen at carbon 13 (with S-stereochemistry), followed by insertion of molecular O2 to form the endoperoxide bridge between carbon 9 and 11 that defines prostaglandins. The insertion of a second molecule of O2 (bis-oxygenase activity) yields a hydroperoxy group in PGG2 that is then reduced to PGH2 by two electrons. Similarly catalyzes successive cyclooxygenation and peroxidation of dihomo-gamma-linoleate (DGLA, C20:3(n-6)) and eicosapentaenoate (EPA, C20:5(n-3)) to corresponding PGH1 and PGH3, the precursors of 1- and 3-series prostaglandins. In an alternative pathway of prostanoid biosynthesis, converts 2-arachidonoyl lysophopholipids to prostanoid lysophopholipids, which are then hydrolyzed by intracellular phospholipases to release free prostanoids. Metabolizes 2-arachidonoyl glycerol yielding the glyceryl ester of PGH2, a process that can contribute to pain response. Generates lipid mediators from n-3 and n-6 polyunsaturated fatty acids (PUFAs) via a lipoxygenase-type mechanism. Oxygenates PUFAs to hydroperoxy compounds and then reduces them to corresponding alcohols. Plays a role in the generation of resolution phase interaction products (resolvins) during both sterile and infectious inflammation. Metabolizes docosahexaenoate (DHA, C22:6(n-3)) to 17R-HDHA, a precursor of the D-series resolvins (RvDs). As a component of the biosynthetic pathway of E-series resolvins (RvEs), converts eicosapentaenoate (EPA, C20:5(n-3)) primarily to 18S-HEPE that is further metabolized by ALOX5 and LTA4H to generate 18S-RvE1 and 18S-RvE2. In vascular endothelial cells, converts docosapentaenoate (DPA, C22:5(n-3)) to 13R-HDPA, a precursor for 13-series resolvins (RvTs) shown to activate macrophage phagocytosis during bacterial infection. In activated leukocytes, contributes to oxygenation of hydroxyeicosatetraenoates (HETE) to diHETES (5,15-diHETE and 5,11-diHETE). Can also use linoleate (LA, (9Z,12Z)-octadecadienoate, C18:2(n-6)) as substrate and produce hydroxyoctadecadienoates (HODEs) in a regio- and stereospecific manner, being (9R)-HODE ((9R)-hydroxy-(10E,12Z)-octadecadienoate) and (13S)-HODE ((13S)-hydroxy-(9Z,11E)-octadecadienoate) its major products. During neuroinflammation, plays a role in neuronal secretion of specialized preresolving mediators (SPMs) 15R-lipoxin A4 that regulates phagocytic microglia. This chain is Prostaglandin G/H synthase 2, found in Homo sapiens (Human).